Consider the following 150-residue polypeptide: Mating pheromone 1 (150 aa).

The signal sequence occupies residues 1–16 (MKAIFIILAILMVTQA). A propeptide spanning residues 17 to 52 (FKMTSKVNTKLQSQIQSKFQSKNKLASTFQTSSKLK) is cleaved from the precursor.

It is found in the secreted. Its function is as follows. Mating ciliate pheromones (or gamones) are diffusible extracellular communication signals that distinguish different intraspecific classes of cells commonly referred to as 'mating types'. They prepare the latter for conjugation by changing their cell surface properties. In Euplotoides octocarinatus (Freshwater ciliate), this protein is Mating pheromone 1.